A 170-amino-acid polypeptide reads, in one-letter code: Large ribosomal subunit protein uL10 (170 aa).

It belongs to the universal ribosomal protein uL10 family. As to quaternary structure, part of the ribosomal stalk of the 50S ribosomal subunit. The N-terminus interacts with L11 and the large rRNA to form the base of the stalk. The C-terminus forms an elongated spine to which L12 dimers bind in a sequential fashion forming a multimeric L10(L12)X complex.

In terms of biological role, forms part of the ribosomal stalk, playing a central role in the interaction of the ribosome with GTP-bound translation factors. The sequence is that of Large ribosomal subunit protein uL10 from Corynebacterium urealyticum (strain ATCC 43042 / DSM 7109).